The chain runs to 514 residues: Transmembrane protein 117 (514 aa).

The Cytoplasmic segment spans residues 1–15 (MGKDFRYYFQHPWSR). Residues 16 to 36 (MIVAYLVIFFNFLIFAEDPVS) form a helical membrane-spanning segment. Over 37-65 (HSQTEANVIVVGNCFSFVTNKYPRGVGWR) the chain is Extracellular. The chain crosses the membrane as a helical span at residues 66 to 86 (ILKVLLWLLAILIGLIAGKFL). At 87–110 (FHQRLFGQLLRLKMFREDHGSWMT) the chain is on the cytoplasmic side. The chain crosses the membrane as a helical span at residues 111–131 (MFFSTILFLFIFSHIYNTILL). Residues 132–154 (MDGNMGAYLITDYMGIRNESFMK) lie on the Extracellular side of the membrane. The helical transmembrane segment at 155–175 (LAAVGTWMGDFVTAWMVTDMM) threads the bilayer. At 176–198 (LQDKPYPDWGKSARAFWKKGNVR) the chain is on the cytoplasmic side. A helical transmembrane segment spans residues 199–219 (IILFWTVLFTLTSVVVLVITT). At 220–239 (DWISWDKLNRGFLPSDEVSR) the chain is on the extracellular side. A helical membrane pass occupies residues 240-260 (AFLASFILVFDLLIVMQDWEF). The Cytoplasmic portion of the chain corresponds to 261-295 (PHFMGDVDVNLPGLHTPHMQFKIPFFQKIFKEEYR). Residues 296 to 316 (IHITGKWFNYGIIFLVLILDL) traverse the membrane as a helical segment. Residues 317 to 394 (NMWKNQIFYK…FIGASLDVKC (78 aa)) lie on the Extracellular side of the membrane. Residues N353 and N371 are each glycosylated (N-linked (GlcNAc...) asparagine). Residues 395 to 415 (LAFVPSLIAFVWFGFFIWFFG) traverse the membrane as a helical segment. At 416–514 (RFLKNEQGME…PAASQRMRTN (99 aa)) the chain is on the cytoplasmic side. Residues 430–450 (TYTRMKRKSPSEHSKDMGITR) form a disordered region. Residues 438–448 (SPSEHSKDMGI) show a composition bias toward basic and acidic residues. T453 bears the Phosphothreonine mark. Positions 494–514 (ESTSEVEAEQEPAASQRMRTN) are disordered.

It belongs to the TMEM117 family.

It localises to the cell membrane. Involved in endoplasmic reticulum (ER) stress-induced cell death pathway. This chain is Transmembrane protein 117 (Tmem117), found in Mus musculus (Mouse).